Consider the following 133-residue polypeptide: Small ribosomal subunit protein uS8c (133 aa).

Belongs to the universal ribosomal protein uS8 family. In terms of assembly, part of the 30S ribosomal subunit.

The protein localises to the plastid. The protein resides in the chloroplast. One of the primary rRNA binding proteins, it binds directly to 16S rRNA central domain where it helps coordinate assembly of the platform of the 30S subunit. The sequence is that of Small ribosomal subunit protein uS8c (rps8) from Mesostigma viride (Green alga).